A 41-amino-acid polypeptide reads, in one-letter code: Urotensin-1 (41 aa).

Valine 41 carries the valine amide modification.

Belongs to the sauvagine/corticotropin-releasing factor/urotensin I family.

It is found in the secreted. Urotensin is found in the teleost caudal neurosecretory system. It has a suggested role in osmoregulation and as a corticotropin-releasing factor. The chain is Urotensin-1 from Catostomus commersonii (White sucker).